We begin with the raw amino-acid sequence, 220 residues long: Sec-independent protein translocase protein TatB (220 aa).

A helical membrane pass occupies residues 1-21 (MFDIGFSELLLVLVIGLVVLG). Residues 192–220 (KQQIDTIDSHGTDLSSAGPSRIHQPGGDQ) are disordered.

It belongs to the TatB family. The Tat system comprises two distinct complexes: a TatABC complex, containing multiple copies of TatA, TatB and TatC subunits, and a separate TatA complex, containing only TatA subunits. Substrates initially bind to the TatABC complex, which probably triggers association of the separate TatA complex to form the active translocon.

Its subcellular location is the cell inner membrane. In terms of biological role, part of the twin-arginine translocation (Tat) system that transports large folded proteins containing a characteristic twin-arginine motif in their signal peptide across membranes. Together with TatC, TatB is part of a receptor directly interacting with Tat signal peptides. TatB may form an oligomeric binding site that transiently accommodates folded Tat precursor proteins before their translocation. This chain is Sec-independent protein translocase protein TatB, found in Yersinia pestis bv. Antiqua (strain Antiqua).